The primary structure comprises 294 residues: Proteasome subunit beta 1 (294 aa).

A propeptide spans 1–65 (removed in mature form; by autocatalysis); sequence MTADRPALRT…MESGDLAPHG (65 aa). Residue threonine 66 is the Nucleophile of the active site.

Belongs to the peptidase T1B family. In terms of assembly, the 20S proteasome core is composed of 14 alpha and 14 beta subunits that assemble into four stacked heptameric rings, resulting in a barrel-shaped structure. The two inner rings, each composed of seven catalytic beta subunits, are sandwiched by two outer rings, each composed of seven alpha subunits. All four combinations of alpha- and beta-subunits (beta2-alpha1, beta2-alpha2, beta1-alpha2 and beta1-alpha1) yield fully assembled and proteolytically active proteasomes. The catalytic chamber with the active sites is on the inside of the barrel. Has probably a gated structure, the ends of the cylinder being occluded by the N-termini of the alpha-subunits. Is likely capped by the proteasome-associated ATPase, ARC.

It localises to the cytoplasm. It carries out the reaction Cleavage of peptide bonds with very broad specificity.. Its pathway is protein degradation; proteasomal Pup-dependent pathway. The formation of the proteasomal ATPase ARC-20S proteasome complex, likely via the docking of the C-termini of ARC into the intersubunit pockets in the alpha-rings, may trigger opening of the gate for substrate entry. Interconversion between the open-gate and close-gate conformations leads to a dynamic regulation of the 20S proteasome proteolysis activity. Functionally, component of the proteasome core, a large protease complex with broad specificity involved in protein degradation. The R.erythropolis proteasomes are able to cleave oligopeptides after Tyr, Phe and Leu, very poorly after Arg but not after Glu. Thus, displays chymotrypsin-like activity, low trypsin-like activity but no caspase-like activity. This Rhodococcus erythropolis (Arthrobacter picolinophilus) protein is Proteasome subunit beta 1.